A 388-amino-acid polypeptide reads, in one-letter code: MEQQEPGATLDDGMDSFLEKFQSQPYRGGFHESQWEEEFEKIPLFMKNSPSEIDPLENPDLACLQSIIFDEERSPEDQARTYKDEGNDYFKEKDYKKAVISYTEGLKKKCADPDLNAVLYTNRAAAQYYLGNFRSSLNDVTAARKLKPCHLKAIIRGASCHLELKNYVEAVNWCDEGLQIDATEKKLLDLRAKADKLKRTEQRDVRKAKLKEKKQQDQNEALLQAIKARNIRLVAEAAGEDEDSASEGLSELVLYGLSSENPCGARLGVDDQGRLSWPVLFLYPEYAQSDLVSAFHEDSRFIDHLMVMFGETPSWDLEQKYCPDNLEVYFEDEDRAELYCVPPSSTLLQVLQHPRYFVKALTPTFLVCVGSSGFCRNYLRGKKVHQVK.

Residue Met1 is modified to N-acetylmethionine. Residue Ser51 is modified to Phosphoserine. 3 TPR repeats span residues 79-112, 117-150, and 151-184; these read ARTY…KCAD, AVLY…KPCH, and LKAI…DATE. Residue Ser244 is modified to Phosphoserine.

The protein belongs to the TTC4 family. In terms of assembly, interacts (via TPR repeats) with HSP90AB1. Interacts with HSPA8, CDC6, TBK1 and MSL1.

It is found in the nucleus. It localises to the nucleoplasm. The protein resides in the cytoplasm. In terms of biological role, may act as a co-chaperone for HSP90AB1. The polypeptide is Tetratricopeptide repeat protein 4 (TTC4) (Bos taurus (Bovine)).